The following is a 294-amino-acid chain: Phosphatidylserine decarboxylase proenzyme (294 aa).

Active-site charge relay system; for autoendoproteolytic cleavage activity residues include Asp88, His145, and Ser248. The Schiff-base intermediate with substrate; via pyruvic acid; for decarboxylase activity role is filled by Ser248. Ser248 is subject to Pyruvic acid (Ser); by autocatalysis.

This sequence belongs to the phosphatidylserine decarboxylase family. PSD-B subfamily. Prokaryotic type I sub-subfamily. In terms of assembly, heterodimer of a large membrane-associated beta subunit and a small pyruvoyl-containing alpha subunit. Requires pyruvate as cofactor. Post-translationally, is synthesized initially as an inactive proenzyme. Formation of the active enzyme involves a self-maturation process in which the active site pyruvoyl group is generated from an internal serine residue via an autocatalytic post-translational modification. Two non-identical subunits are generated from the proenzyme in this reaction, and the pyruvate is formed at the N-terminus of the alpha chain, which is derived from the carboxyl end of the proenzyme. The autoendoproteolytic cleavage occurs by a canonical serine protease mechanism, in which the side chain hydroxyl group of the serine supplies its oxygen atom to form the C-terminus of the beta chain, while the remainder of the serine residue undergoes an oxidative deamination to produce ammonia and the pyruvoyl prosthetic group on the alpha chain. During this reaction, the Ser that is part of the protease active site of the proenzyme becomes the pyruvoyl prosthetic group, which constitutes an essential element of the active site of the mature decarboxylase.

The protein localises to the cell membrane. The catalysed reaction is a 1,2-diacyl-sn-glycero-3-phospho-L-serine + H(+) = a 1,2-diacyl-sn-glycero-3-phosphoethanolamine + CO2. The protein operates within phospholipid metabolism; phosphatidylethanolamine biosynthesis; phosphatidylethanolamine from CDP-diacylglycerol: step 2/2. In terms of biological role, catalyzes the formation of phosphatidylethanolamine (PtdEtn) from phosphatidylserine (PtdSer). The polypeptide is Phosphatidylserine decarboxylase proenzyme (Herminiimonas arsenicoxydans).